We begin with the raw amino-acid sequence, 322 residues long: Deoxyhypusine hydroxylase (322 aa).

2 HEAT-like PBS-type repeats span residues 76 to 102 (LKHE…VLAD) and 109 to 135 (VRHE…YFKE). The Fe cation site is built by H78, E79, H111, E112, H236, E237, H269, and E270. An HEAT-like PBS-type 3 repeat occupies 267–293 (VRHEAAEALGSIATDDVLPVLKEHLKD).

The protein belongs to the deoxyhypusine hydroxylase family. Fe(2+) serves as cofactor.

The protein localises to the cytoplasm. It is found in the nucleus. The enzyme catalyses [eIF5A protein]-deoxyhypusine + AH2 + O2 = [eIF5A protein]-hypusine + A + H2O. The protein operates within protein modification; eIF5A hypusination. In terms of biological role, catalyzes the hydroxylation of the N(6)-(4-aminobutyl)-L-lysine intermediate to form hypusine, an essential post-translational modification only found in mature eIF-5A factor. This is Deoxyhypusine hydroxylase from Kluyveromyces lactis (strain ATCC 8585 / CBS 2359 / DSM 70799 / NBRC 1267 / NRRL Y-1140 / WM37) (Yeast).